We begin with the raw amino-acid sequence, 107 residues long: Iron-sulfur cluster assembly protein CyaY (107 aa).

The protein belongs to the frataxin family.

Functionally, involved in iron-sulfur (Fe-S) cluster assembly. May act as a regulator of Fe-S biogenesis. This chain is Iron-sulfur cluster assembly protein CyaY, found in Neisseria meningitidis serogroup B (strain ATCC BAA-335 / MC58).